An 837-amino-acid polypeptide reads, in one-letter code: Outer membrane usher protein HifC (837 aa).

An N-terminal signal peptide occupies residues 1–26; it reads MKTKIFPLNKIAFACSLLLANPLAWA. Cysteines 813 and 833 form a disulfide.

This sequence belongs to the fimbrial export usher family.

The protein localises to the cell outer membrane. Its function is as follows. Essential for piliation. The protein is Outer membrane usher protein HifC (hifC) of Haemophilus influenzae.